A 1083-amino-acid polypeptide reads, in one-letter code: Probable arabinosyltransferase B (1083 aa).

Helical transmembrane passes span 23-45 (VARWVAAIAGLIGFVSSVVTPLL), 222-239 (FAMMLAIITTVGALVALW), 252-274 (LIPARWSMFTLVDVAVIFGFLLW), 331-350 (SMWIRLPDLICGVACWLLLS), 357-379 (LGPAIVGFKPALWAAGLVLLAAW), 421-443 (TAAFTIGIQPTGLIAVAALLAGG), 456-478 (AVGAWPLVAPLLAAGTVVLTVVF), 525-542 (FGFLITALCLFTAVLITL), 555-572 (AWRLIGTILGTMFFLTFA), 576-598 (WVHHFGLFAALGAAVAALTTVLV), 611-633 (AFLAALLFVMTLCFATTNGWWYV), 648-670 (DGITFSTIFFILFAIVALYAYYL), and 690-712 (FWAPIPFAAGLMTLVFIGSMVAG).

The protein belongs to the emb family.

It localises to the cell membrane. In terms of biological role, arabinosyl transferase responsible for the polymerization of arabinose into the arabinan of arabinogalactan. The protein is Probable arabinosyltransferase B (embB) of Mycobacterium leprae (strain TN).